A 741-amino-acid polypeptide reads, in one-letter code: Photosystem I P700 chlorophyll a apoprotein A2 (741 aa).

Over 2–38 (ATKFPKFSQDLAQDPTTRRIWYAIAMAHDFESHDGMT) the chain is Cytoplasmic. A helical membrane pass occupies residues 39–70 (EENLYQKIFASHFGHLAIIFLWVSGSLFHVAW). The Lumenal, thylakoid portion of the chain corresponds to 71–131 (QGNFEQWVQD…HWWYTIGMRT (61 aa)). A helical transmembrane segment spans residues 132–156 (NGDLYQGAIFLLILASLALFAGWLH). The Cytoplasmic segment spans residues 157-172 (LQPKFRPSLSWFKNAE). A helical transmembrane segment spans residues 173-195 (SRLNHHLAGLFGVSSLAWAGHLI). Residues 196 to 269 (HVAIPESRGQ…GFHPQTESLW (74 aa)) lie on the Lumenal, thylakoid side of the membrane. The chain crosses the membrane as a helical span at residues 270–287 (LTDMAHHHLAIAVLFIVA). At 288-334 (GHMYRTQFGIGHSIKEMMDAKDFFGTKVEGPFNMPHQGIYETYNNSL) the chain is on the cytoplasmic side. Residues 335–358 (HFQLGWHLACLGVITSLVAQHMYS) form a helical membrane-spanning segment. Topologically, residues 359–368 (LPPYAFIAQD) are lumenal, thylakoid. Residues 369–400 (HTTMAALYTHHQYIAGFLMVGAFAHGAIFLVR) traverse the membrane as a helical segment. Residues 401–419 (DYDPAQNKGNVLDRVLQHK) lie on the Cytoplasmic side of the membrane. Residues 420 to 449 (EAIISHLSWVSLFLGFHTLGLYVHNDVVVA) traverse the membrane as a helical segment. Topologically, residues 450–520 (FGTPEKQILI…GTNSLFLTIG (71 aa)) are lumenal, thylakoid. A helical transmembrane segment spans residues 521–545 (PGDFLVHHAIALGLHTTTLILVKGA). Topologically, residues 546 to 578 (LDARGSKLMPDKKDFGYAFPCDGPGRGGTCDIS) are cytoplasmic. Cysteine 566 and cysteine 575 together coordinate [4Fe-4S] cluster. The chain crosses the membrane as a helical span at residues 579–610 (AWDAFYLAMFWMLNTIGWVTFYWHWKHLGVWE). The Lumenal, thylakoid portion of the chain corresponds to 611–650 (GNVAQFNESSTYLMGWLRDYLWLNSSQLINGYNPFGTNNL). Residues 651 to 672 (SVWAWMFLFGHLVWATGFMFLI) form a helical membrane-spanning segment. Residues histidine 661, methionine 669, and tyrosine 677 each coordinate chlorophyll a. The Cytoplasmic portion of the chain corresponds to 673-708 (SWRGYWQELIETLVWAHERTPLANLVRWKDKPVALS). Tryptophan 678 is a phylloquinone binding site. A helical transmembrane segment spans residues 709 to 737 (IVQARLVGLAHFSVGYILTYAAFLIASTA). The Lumenal, thylakoid segment spans residues 738 to 741 (AKFG).

The protein belongs to the PsaA/PsaB family. In terms of assembly, the PsaA/B heterodimer binds the P700 chlorophyll special pair and subsequent electron acceptors. PSI consists of a core antenna complex that captures photons, and an electron transfer chain that converts photonic excitation into a charge separation. The cyanobacterial PSI reaction center is composed of one copy each of PsaA,B,C,D,E,F,I,J,K,L,M and X, and forms trimeric complexes. PSI electron transfer chain: 5 chlorophyll a, 1 chlorophyll a', 2 phylloquinones and 3 4Fe-4S clusters. PSI core antenna: 90 chlorophyll a, 22 carotenoids, 3 phospholipids and 1 galactolipid. P700 is a chlorophyll a/chlorophyll a' dimer, A0 is one or more chlorophyll a, A1 is one or both phylloquinones and FX is a shared 4Fe-4S iron-sulfur center. serves as cofactor.

It is found in the cellular thylakoid membrane. The catalysed reaction is reduced [plastocyanin] + hnu + oxidized [2Fe-2S]-[ferredoxin] = oxidized [plastocyanin] + reduced [2Fe-2S]-[ferredoxin]. PsaA and PsaB bind P700, the primary electron donor of photosystem I (PSI), as well as the electron acceptors A0, A1 and FX. PSI is a plastocyanin/cytochrome c6-ferredoxin oxidoreductase, converting photonic excitation into a charge separation, which transfers an electron from the donor P700 chlorophyll pair to the spectroscopically characterized acceptors A0, A1, FX, FA and FB in turn. Oxidized P700 is reduced on the lumenal side of the thylakoid membrane by plastocyanin or cytochrome c6. The sequence is that of Photosystem I P700 chlorophyll a apoprotein A2 (psaB) from Thermosynechococcus vestitus (strain NIES-2133 / IAM M-273 / BP-1).